Consider the following 251-residue polypeptide: Uridylate kinase (251 aa).

Residue 24-27 (KISG) participates in ATP binding. The segment at 32 to 37 (GDQGFG) is involved in allosteric activation by GTP. Position 66 (Gly66) interacts with UMP. The ATP site is built by Gly67 and Arg71. UMP-binding positions include Asp86 and 147–154 (TGNPYFTT). Asn175, Tyr181, and Asp184 together coordinate ATP.

The protein belongs to the UMP kinase family. In terms of assembly, homohexamer.

The protein resides in the cytoplasm. It catalyses the reaction UMP + ATP = UDP + ADP. The protein operates within pyrimidine metabolism; CTP biosynthesis via de novo pathway; UDP from UMP (UMPK route): step 1/1. Allosterically activated by GTP. Inhibited by UTP. Its function is as follows. Catalyzes the reversible phosphorylation of UMP to UDP. The polypeptide is Uridylate kinase (Ruegeria pomeroyi (strain ATCC 700808 / DSM 15171 / DSS-3) (Silicibacter pomeroyi)).